Consider the following 135-residue polypeptide: GADEMCPPGWSSNGVYCYMLFKEPKTWDEAEKFCNKQGKDGHLLSIESKKEEILVDIVVSENIGKMYKIWTGLSERSKEQHCSSRWSDGSFFRSYEIAIRYSECFVLEKQSVFRTWVATPCENTFPFMCKYPVPR.

The first 4 residues, glycine 1–glutamate 4, serve as a signal peptide directing secretion. 3 cysteine pairs are disulfide-bonded: cysteine 6/cysteine 17, cysteine 34/cysteine 129, and cysteine 104/cysteine 121. The C-type lectin domain occupies asparagine 13–lysine 130.

This sequence belongs to the snaclec family. In terms of assembly, heterodimer of subunits alpha and beta; disulfide-linked. In terms of tissue distribution, expressed by the venom gland.

The protein localises to the secreted. Its function is as follows. Binding of echicetin to GPIbalpha (GP1BA) receptor on platelets alone results in inhibition of platelet aggregation, while binding to both GP1BA receptor and IgMk promotes platelet aggregation and signal transduction. In Echis carinatus (Saw-scaled viper), this protein is Snaclec echicetin subunit alpha.